The following is a 118-amino-acid chain: Holo-[acyl-carrier-protein] synthase (118 aa).

Positions 8 and 57 each coordinate Mg(2+).

It belongs to the P-Pant transferase superfamily. AcpS family. Mg(2+) is required as a cofactor.

The protein resides in the cytoplasm. The catalysed reaction is apo-[ACP] + CoA = holo-[ACP] + adenosine 3',5'-bisphosphate + H(+). Transfers the 4'-phosphopantetheine moiety from coenzyme A to a Ser of acyl-carrier-protein. This chain is Holo-[acyl-carrier-protein] synthase, found in Pediococcus pentosaceus (strain ATCC 25745 / CCUG 21536 / LMG 10740 / 183-1w).